The sequence spans 31 residues: Palustrin-2c (31 aa).

Residues cysteine 23 and cysteine 29 are joined by a disulfide bond.

In terms of tissue distribution, expressed by the skin glands.

The protein localises to the secreted. Functionally, antimicrobial activity against Gram-negative bacterium E.coli. This is Palustrin-2c from Lithobates palustris (Pickerel frog).